Here is a 499-residue protein sequence, read N- to C-terminus: Centrosomal protein of 57 kDa (499 aa).

Low complexity predominate over residues 1-16; it reads MAAASVSAASDSQFSS. A disordered region spans residues 1-41; sequence MAAASVSAASDSQFSSVLAEPSRSNGNMVHHSSSPYVLYPP. Residues 22 to 35 show a composition bias toward polar residues; that stretch reads SRSNGNMVHHSSSP. Position 53 is a phosphoserine (Ser53). Residues 58-239 form a centrosome localization domain (CLD) region; that stretch reads TFAYPESNSR…RAAELQSGIE (182 aa). Residues 63–242 adopt a coiled-coil conformation; that stretch reads ESNSRAIFSA…ELQSGIEANR (180 aa). Disordered regions lie at residues 255–275 and 424–476; these read TSTRKIKKKKSKPPEKKGFRN and LEKQ…SRKN. Residues 278 to 490 are mediates interaction with microtubules; sequence GAQPHYRLCL…KDMQTLQNSL (213 aa). Residues 388–491 adopt a coiled-coil conformation; that stretch reads PSEELKDNLE…DMQTLQNSLQ (104 aa). Basic and acidic residues predominate over residues 427–443; the sequence is QSTDKQKELKGNKKTLD. Residues 448-458 are compositionally biased toward low complexity; sequence SSSRSSVITRT. Residues 460–474 are compositionally biased toward basic and acidic residues; that stretch reads SKKDFTKQRPGEKSR.

Belongs to the translokin family. As to quaternary structure, homodimer and homooligomer. Interacts with FGF2 and RAP80. Does not interact with FGF1 or FGF2 isoform 24 kDa. Interacts with microtubules. In terms of tissue distribution, ubiquitous (at protein level).

The protein localises to the nucleus. The protein resides in the cytoplasm. Its subcellular location is the cytoskeleton. It is found in the microtubule organizing center. It localises to the centrosome. Centrosomal protein which may be required for microtubule attachment to centrosomes. May act by forming ring-like structures around microtubules. Mediates nuclear translocation and mitogenic activity of the internalized growth factor FGF2. The chain is Centrosomal protein of 57 kDa (Cep57) from Rattus norvegicus (Rat).